Consider the following 2458-residue polypeptide: Highly reducing polyketide synthase alnA (2458 aa).

Positions 48 to 473 (TMPIAIVGMA…GANAHVILDD (426 aa)) constitute a Ketosynthase family 3 (KS3) domain. Catalysis depends on for beta-ketoacyl synthase activity residues Cys221, His356, and His396. Positions 488–515 (HTTLSESEDSSDSGLEMDSSTSDSGEGQ) are disordered. The segment covering 499–515 (DSGLEMDSSTSDSGEGQ) has biased composition (low complexity). The segment at 609–932 (VFTGQGAQWP…PYMSVLSRGK (324 aa)) is malonyl-CoA:ACP transacylase (MAT) domain. The active-site For malonyltransferase activity is Ser697. Residues 1000 to 1130 (NDLLGVPVAQ…GSFSLHYEDA (131 aa)) are N-terminal hotdog fold. Positions 1000–1307 (NDLLGVPVAQ…VTEVSAGAST (308 aa)) constitute a PKS/mFAS DH domain. Residues 1001–1305 (DLLGVPVAQQ…MTVTEVSAGA (305 aa)) are dehydratase (DH) domain. His1032 functions as the Proton acceptor; for dehydratase activity in the catalytic mechanism. Residues 1148–1307 (TRACRKLDVE…VTEVSAGAST (160 aa)) are C-terminal hotdog fold. Catalysis depends on Asp1218, which acts as the Proton donor; for dehydratase activity. The segment at 1740–2051 (GSPSQARWVP…GQQQHERVAA (312 aa)) is enoylreductase (ER) domain. Positions 2076–2264 (KPDATYILAG…VTDASHFNEN (189 aa)) are ketoreductase (KR) domain. The Carrier domain occupies 2359 to 2441 (STTVAQAHEV…RLALKIVSKS (83 aa)). Ser2401 carries the post-translational modification O-(pantetheine 4'-phosphoryl)serine.

It functions in the pathway polyketide biosynthesis. Highly reducing polyketide synthase; part of the gene cluster that mediates the biosynthesis of asperlin, a polyketide showing anti-inflammatory, antitumor and antibiotic activities. The first step of the asperlin biosynthesis is the production of the intermediate 2,4,6-octatrienoic acid by the highly redusing polyketide synthase alnA with cleavage of the PKS product by the esterase alnB. 2,4,6-octatrienoic acid is further converted to asperlin via several steps involving the remaining enzymes from the cluster. This Emericella nidulans (strain FGSC A4 / ATCC 38163 / CBS 112.46 / NRRL 194 / M139) (Aspergillus nidulans) protein is Highly reducing polyketide synthase alnA.